Consider the following 624-residue polypeptide: MEPPDARAGLLWLTLLLSGYSGAQAELHVSVPPRVEVMRGEQIALDCTPREHPENYVLEWLLVDASGARHRLASVEPQGSEFLGTIHNSRGRRPPYKIDSLGRLVIAEAQVGDERDYVCVVKAGAAGTSEATSSVRVFATPEATEVAPNKGTLSVMEQFAQEIATCSSNNGNPVPRITWYQNGQRLDVPMELNSKGYMTSRTVREASGLYSLTSTLYLRLHKEDRDASFHCAAHYDLPSGQHGRLDSHTFRLTLHYPTEHVEFWVGSPSTTEGWVREGDAVQLLCQGDGSPSPEYSFFREQGNQEEQLNVNLKGNLTLEGVHRSQSGIYGCRVEDYDADEEVQLVKKLKLHVAYLDPLELSVPEEFSVFLNSSGTVVNCSARGLPAPIVRWTKDSVTVADGPILSLDSVTFDSAGTYTCEASTPTVPLLSRTQSFQLVVQGAPELKPNEIKPKSGTSWTEGDEVMLTCSARGFPEPKLTWSQRGDTTPAEPPFEGRGWMSSSLTLKVTSALSREGVSCEASNIHGKNGHVFHFGSVAPQTAQAGVAVMAVAVSVGLLLLVVAAFYCMRRKGRPGCCQRAEKGAPPAREPELSHSGSERPEHTGLLMGGPSGGGRGGNGGFGDEC.

An N-terminal signal peptide occupies residues 1–25; the sequence is MEPPDARAGLLWLTLLLSGYSGAQA. Ig-like V-type domains lie at 26 to 136 and 141 to 251; these read ELHV…SSVR and PEAT…HTFR. Residues 26 to 543 are Extracellular-facing; that stretch reads ELHVSVPPRV…GSVAPQTAQA (518 aa). 3 disulfides stabilise this stretch: Cys47-Cys119, Cys166-Cys231, and Cys285-Cys331. Ig-like C2-type domains follow at residues 268 to 343, 357 to 436, and 443 to 534; these read PSTT…EEVQ, PLEL…QSFQ, and PELK…FHFG. Asn315, Asn371, and Asn378 each carry an N-linked (GlcNAc...) asparagine glycan. 2 disulfide bridges follow: Cys379-Cys419 and Cys468-Cys518. Residues 477 to 497 are disordered; sequence KLTWSQRGDTTPAEPPFEGRG. The chain crosses the membrane as a helical span at residues 544-564; sequence GVAVMAVAVSVGLLLLVVAAF. At 565–624 the chain is on the cytoplasmic side; the sequence is YCMRRKGRPGCCQRAEKGAPPAREPELSHSGSERPEHTGLLMGGPSGGGRGGNGGFGDEC. The segment at 574-624 is disordered; sequence GCCQRAEKGAPPAREPELSHSGSERPEHTGLLMGGPSGGGRGGNGGFGDEC. Positions 587–601 are enriched in basic and acidic residues; that stretch reads REPELSHSGSERPEH. Ser592, Ser594, and Ser596 each carry phosphoserine. The span at 605 to 624 shows a compositional bias: gly residues; that stretch reads LMGGPSGGGRGGNGGFGDEC.

As to quaternary structure, homodimer. Interacts with ITGA4:ITGB1. Interacts with spectrins SPTA1 and SPTB1.

Its subcellular location is the cell membrane. Transmembrane glycoprotein that functions as both a receptor and an adhesion molecule playing a crucial role in cell adhesion, motility, migration and invasion. Extracellular domain enables binding to extracellular matrix proteins, such as laminin, integrin and other ligands while its intracellular domain interacts with cytoskeletal proteins like hemoglobin, facilitating cell signal transduction. Serves as a receptor for laminin alpha-5/LAMA5 to promote cell adhesion. Mechanistically, JAK2 induces BCAM phosphorylation and activates its adhesion to laminin by stimulating a Rap1/AKT signaling pathway in the absence of EPOR. The protein is Basal cell adhesion molecule (Bcam) of Rattus norvegicus (Rat).